The primary structure comprises 902 residues: Tiger protein B1 (902 aa).

Positions 1–24 (MKVIYIYLLLLLVCKFLFVKSSCS) are cleaved as a signal peptide. The Extracellular portion of the chain corresponds to 25-803 (LKVGKIECTK…IIYSENKSTG (779 aa)). N-linked (GlcNAc...) asparagine glycosylation is found at Asn-43, Asn-144, Asn-184, Asn-223, Asn-272, Asn-279, Asn-288, Asn-358, Asn-389, Asn-398, Asn-437, Asn-559, Asn-628, Asn-644, Asn-706, Asn-753, Asn-764, Asn-771, and Asn-799. The IPT/TIG 1 domain occupies 249 to 323 (MEGVLNDNGG…ITIDGEYKSN (75 aa)). 2 IPT/TIG domains span residues 603–680 (PIIE…ISSS) and 704–788 (ITNT…IFQF). The helical transmembrane segment at 804–824 (FPNEMYLGFVVFVIFIALISF) threads the bilayer. The Cytoplasmic portion of the chain corresponds to 825–902 (AAKNQIEKYF…IRRCFKEHTD (78 aa)).

The protein localises to the cell membrane. In terms of biological role, tgrB1 and tgrC1 are involved in kin discrimination. They play an essential role in aggregation and subsequent development. The sequence is that of Tiger protein B1 (tgrB1) from Dictyostelium discoideum (Social amoeba).